A 200-amino-acid polypeptide reads, in one-letter code: Probable GTP-binding protein EngB (200 aa).

In terms of domain architecture, EngB-type G spans 24–198 (EGMEVAFAGR…QAQLDEWLGI (175 aa)). Residues 32–39 (GRSNVGKS), 59–63 (GRTQM), 77–80 (DLPG), 144–147 (TKSD), and 177–179 (FSA) contribute to the GTP site. Residues S39 and T61 each contribute to the Mg(2+) site.

Belongs to the TRAFAC class TrmE-Era-EngA-EngB-Septin-like GTPase superfamily. EngB GTPase family. Mg(2+) serves as cofactor.

In terms of biological role, necessary for normal cell division and for the maintenance of normal septation. In Nitrosococcus oceani (strain ATCC 19707 / BCRC 17464 / JCM 30415 / NCIMB 11848 / C-107), this protein is Probable GTP-binding protein EngB.